Here is a 175-residue protein sequence, read N- to C-terminus: Rubredoxin-1 (175 aa).

2 Rubredoxin-like domains span residues 1–53 (MARY…FVLI) and 119–170 (FLKW…YVLY). Fe cation is bound by residues Cys6, Cys9, Cys39, Cys42, Cys124, Cys127, Cys157, and Cys160.

It belongs to the rubredoxin family. Fe(3+) serves as cofactor.

The protein resides in the cytoplasm. It functions in the pathway hydrocarbon metabolism; alkane degradation. Its function is as follows. Involved in the hydrocarbon hydroxylating system, which transfers electrons from NADH to rubredoxin reductase and then through rubredoxin to alkane 1 monooxygenase. This is Rubredoxin-1 (alkG) from Pseudomonas putida (Arthrobacter siderocapsulatus).